The sequence spans 419 residues: 1,4-beta-D-glucan cellobiohydrolase CEL6B (419 aa).

The first 47 residues, 1 to 47 (MGESFLLLQPASPALSPTPSSLLLGPTITMRADVLIAALATGALVAA), serve as a signal peptide directing secretion. Substrate is bound by residues tryptophan 111 and serine 113. Catalysis depends on proton donor residues aspartate 152 and aspartate 199. Tryptophan 247 is a binding site for substrate. A glycan (N-linked (GlcNAc...) asparagine) is linked at asparagine 284. Position 287 (asparagine 287) interacts with substrate. Asparagine 298 carries N-linked (GlcNAc...) asparagine glycosylation. Tryptophan 347 contacts substrate. An N-linked (GlcNAc...) asparagine glycan is attached at asparagine 364. Positions 375 and 379 each coordinate substrate.

The protein belongs to the glycosyl hydrolase 6 (cellulase B) family. In terms of processing, both N- and O-glycosylated.

Its subcellular location is the secreted. The enzyme catalyses Hydrolysis of (1-&gt;4)-beta-D-glucosidic linkages in cellulose and cellotetraose, releasing cellobiose from the non-reducing ends of the chains.. Functionally, exoglucanase that plays an important function in biomass degradation by catalyzing the hydrolysis of the non-reducing end beta-1,4-glucosidic linkages in cellulose and cellotetraose to release cellobiose. Hydrolyzes crystalline and amorphous cellulose but is inactive on hydroxyethyl cellulose, mannan, galactomannan, xyloglucan, arabinoxylan, arabinan, xylan, and pectin. This chain is 1,4-beta-D-glucan cellobiohydrolase CEL6B, found in Podospora anserina (strain S / ATCC MYA-4624 / DSM 980 / FGSC 10383) (Pleurage anserina).